Reading from the N-terminus, the 66-residue chain is Large ribosomal subunit protein bL31 (66 aa).

Residues Cys16, Cys18, Cys36, and Cys39 each contribute to the Zn(2+) site.

Belongs to the bacterial ribosomal protein bL31 family. Type A subfamily. As to quaternary structure, part of the 50S ribosomal subunit during exponential growth. Requires Zn(2+) as cofactor.

Functionally, binds the 23S rRNA. In terms of biological role, while neither of the L31 paralogs is essential, this protein seems to function as the main L31 protein. Has a lower affinity for 70S ribosomes than the non-zinc-containing paralog L31B (ytiA); is displaced by it to varying extents, even under zinc-replete conditions. The chain is Large ribosomal subunit protein bL31 (rpmE) from Bacillus subtilis (strain 168).